We begin with the raw amino-acid sequence, 470 residues long: 3-isopropylmalate dehydratase large subunit (470 aa).

Residues 294-307 (PDQNTGISGSTPNP) show a composition bias toward polar residues. The segment at 294–313 (PDQNTGISGSTPNPSDAADD) is disordered. [4Fe-4S] cluster is bound by residues Cys347, Cys407, and Cys410.

The protein belongs to the aconitase/IPM isomerase family. LeuC type 1 subfamily. As to quaternary structure, heterodimer of LeuC and LeuD. Requires [4Fe-4S] cluster as cofactor.

It carries out the reaction (2R,3S)-3-isopropylmalate = (2S)-2-isopropylmalate. Its pathway is amino-acid biosynthesis; L-leucine biosynthesis; L-leucine from 3-methyl-2-oxobutanoate: step 2/4. In terms of biological role, catalyzes the isomerization between 2-isopropylmalate and 3-isopropylmalate, via the formation of 2-isopropylmaleate. In Akkermansia muciniphila (strain ATCC BAA-835 / DSM 22959 / JCM 33894 / BCRC 81048 / CCUG 64013 / CIP 107961 / Muc), this protein is 3-isopropylmalate dehydratase large subunit.